Consider the following 68-residue polypeptide: Large ribosomal subunit protein bL33c (68 aa).

The protein belongs to the bacterial ribosomal protein bL33 family.

The protein resides in the plastid. It is found in the chloroplast. The sequence is that of Large ribosomal subunit protein bL33c from Pinus koraiensis (Korean pine).